The primary structure comprises 513 residues: Zinc finger protein RFP (513 aa).

An RING-type zinc finger spans residues Cys-16–Arg-57. 4 residues coordinate Zn(2+): Cys-96, His-99, Cys-118, and His-124. The segment at Cys-96–His-127 adopts a B box-type zinc-finger fold. 2 coiled-coil regions span residues Leu-132–Leu-172 and Gln-282–Ala-311. One can recognise a B30.2/SPRY domain in the interval Met-298–Met-492.

It belongs to the TRIM/RBCC family. Homomultimerizes. Part of a complex consisting of TRIM27, USP7 and MAGEL2; directly interacts with USP7. Interacts with PML, EIF3S6, EPC1, CHD4 and EID1. Interacts with MAGED4, MAGEF1 and MAGEL2. Interacts with PTPN11. Interacts with autophagy receptor p62/SQSTM1. As to quaternary structure, (Microbial infection) Interacts with M.tuberculosis PtpA, whick blocks TRIM27-promoted JNK/p38 MAPK pathway activation and cell apoptosis. In terms of assembly, (Microbial infection) Interacts with herpes simplex virus protein ICP0. As to expression, expressed in testis namely within the seminiferous tubules.

The protein resides in the nucleus. Its subcellular location is the cytoplasm. It is found in the PML body. It localises to the early endosome. The protein localises to the mitochondrion. It catalyses the reaction S-ubiquitinyl-[E2 ubiquitin-conjugating enzyme]-L-cysteine + [acceptor protein]-L-lysine = [E2 ubiquitin-conjugating enzyme]-L-cysteine + N(6)-ubiquitinyl-[acceptor protein]-L-lysine.. Its pathway is protein modification; protein ubiquitination. Functionally, E3 ubiquitin-protein ligase that mediates ubiquitination of various substrates and thereby plays a role in diffent processes including proliferation, innate immunity, apoptosis, immune response or autophagy. Ubiquitinates PIK3C2B and inhibits its activity by mediating the formation of 'Lys-48'-linked polyubiquitin chains; the function inhibits CD4 T-cell activation. Acts as a regulator of retrograde transport: together with MAGEL2, mediates the formation of 'Lys-63'-linked polyubiquitin chains at 'Lys-220' of WASHC1, leading to promote endosomal F-actin assembly. Has a transcriptional repressor activity by cooperating with EPC1. Induces apoptosis by activating Jun N-terminal kinase and p38 kinase and also increases caspase-3-like activity independently of mitochondrial events. May function in male germ cell development. Has DNA-binding activity and preferentially bound to double-stranded DNA. Forms a complex with and ubiquitinates the ubiquitin-specific protease USP7, which in turn deubiquitinates RIPK1 resulting in the positive regulation of TNF-alpha-induced apoptosis. In addition, acts with USP7 or PTPN11 as an inhibitor of the antiviral signaling pathway by promoting kinase TBK1 ubiquitination and degradation. Acts as a negative regulator of NOD2 signaling by mediating ubiquitination of NOD2, promoting its degradation by the proteasome. Alternatively, facilitates mitophagy via stabilization of active TBK1. Negatively regulates autophagy flux under basal conditions by directly polyubiquitinating ULK1. During starvation-induced autophagy, catalyzes non-degradative ubiquitination of the kinase STK38L promoting its activation and phosphorylation of ULK1 leading to its ubiquitination and degradation to restrain the amplitude and duration of autophagy. (Microbial infection) Positively regulates hepatitis C virus replication by suppressing type I IFN response during infection. This Homo sapiens (Human) protein is Zinc finger protein RFP.